The sequence spans 440 residues: ATP-dependent RNA helicase sub2 (440 aa).

Acidic residues predominate over residues 1-16 (MSHEEDLIDYSDEELQ). A disordered region spans residues 1–42 (MSHEEDLIDYSDEELQTTDAAATTAAPASNGEAKKGDLTVSG). The segment covering 17 to 28 (TTDAAATTAAPA) has biased composition (low complexity). The short motif at 57–85 (TGFRDFLLKEELLRAITDCGFEHPSEVQQ) is the Q motif element. In terms of domain architecture, Helicase ATP-binding spans 88–263 (IPTAILNVDV…KKFMRNPLEV (176 aa)). 101-108 (AKSGLGKT) lines the ATP pocket. A DEAD box motif is present at residues 210 to 213 (DECD). The region spanning 291–436 (KLNELLDSLE…EYPEGGVDSS (146 aa)) is the Helicase C-terminal domain.

This sequence belongs to the DEAD box helicase family. DECD subfamily.

It localises to the nucleus. The enzyme catalyses ATP + H2O = ADP + phosphate + H(+). ATP-binding RNA helicase involved in transcription elongation and required for the export of mRNA out of the nucleus. SUB2 also plays a role in pre-mRNA splicing and spliceosome assembly. May be involved in rDNA and telomeric silencing, and maintenance of genome integrity. This chain is ATP-dependent RNA helicase sub2 (sub2), found in Aspergillus niger (strain ATCC MYA-4892 / CBS 513.88 / FGSC A1513).